We begin with the raw amino-acid sequence, 300 residues long: Cation-efflux pump FieF (300 aa).

Residues 24–44 traverse the membrane as a helical segment; the sequence is LLIKIFAWWYTGSVSILAALV. Zn(2+) contacts are provided by Asp-45 and Asp-49. Helical transmembrane passes span 82-102 and 114-134; these read AALAQSMFISGSALFLFLTGI and AGVGVVVTLIALFSTLALVTF. Residues His-153 and Asp-157 each coordinate Zn(2+). A run of 2 helical transmembrane segments spans residues 156–176 and 178–198; these read SDVMMNGAILVALGLSWYGWH and ADALFALGIGIYILYSALRMG.

It belongs to the cation diffusion facilitator (CDF) transporter (TC 2.A.4) family. FieF subfamily. As to quaternary structure, homodimer.

It localises to the cell inner membrane. It catalyses the reaction Zn(2+)(in) + H(+)(out) = Zn(2+)(out) + H(+)(in). It carries out the reaction Cd(2+)(in) + H(+)(out) = Cd(2+)(out) + H(+)(in). The enzyme catalyses Fe(2+)(in) + H(+)(out) = Fe(2+)(out) + H(+)(in). Functionally, divalent metal cation transporter which exports Zn(2+), Cd(2+) and possibly Fe(2+). May be involved in zinc and iron detoxification by efflux. The chain is Cation-efflux pump FieF from Klebsiella pneumoniae (strain 342).